An 852-amino-acid chain; its full sequence is MAKEKISPGMQQYLDIKKNYPDAFLLFRMGDFYELFYDDAVKAAQILEISLTSRNKNADNPIPMAGVPYHSAQAYIDVLVEMGYKVAIAEQMEDPKQAVGVVKREVVQVITPGTVVDSSKPDSANNFLVAIDKVGSRFGLSYMDVSTGEFFATELDDFSSVCSEIQNLKAREVVVGYDLLETDEQVLVNQLNLLLSKETEGYDDVHLIGNSLTDLESSVASKLLQYVHRTQMRELSHLQKAQHYEIKDYLQMSYATKSSLDLLENARTGKKHGSLFWLLDKTKTAMGMRLLRTWIDRPLVNQASIIERQNIIQVFLDNFFERSDLAESLKGVYDIERLASRVSFGKANPKDLIQLGHTLAQVPVIKAILESFNDDALSGLLQELDALPELESLIRSAIDPDAPATITEGGIIRDGFDETLDKYRKVMSEGTSWIADIEAKEREASGITTLKIDYNRKDGYYFHVTNSNLSLVPDHFFRKATLKNSERFGTAELAKIEGEMLEAREKSSTLEYDIFMRVREQVERYIDRLQSLAKAIATVDVLQSLAVTAETNHYVRPVFNDEHRIAIDRGRHAVVEKVMGVQEYIPNTITFDSQTNIQLITGPNMSGKSTYMRQLALSVVMAQMGAYVPADSVDLPVFDAIYTRIGAADDLISGQSTFMVEMMEANQAIKRATPNSLIIFDELGRGTATYDGMALAQSIIEFIHDKVGAKTMFATHYHELTALSNSLTHLVNVHVATLEKDGEVTFLHKIVDGPADKSYGIHVAKIAGLPTDLLNRADTILTQLEGETVVIQPQEKVLSQEKPAIETHVNEQISLFDDFTENPVLQELRDLDIYNMTPMQVMMAVADLKQKL.

Gly-602–Ser-609 is a binding site for ATP.

The protein belongs to the DNA mismatch repair MutS family.

Its function is as follows. This protein is involved in the repair of mismatches in DNA. It is possible that it carries out the mismatch recognition step. This protein has a weak ATPase activity. The protein is DNA mismatch repair protein MutS of Streptococcus thermophilus (strain CNRZ 1066).